We begin with the raw amino-acid sequence, 488 residues long: MPKKISAMDIYKLLPKTNCKKCGYPSCMAFATKLLEKEATIDQCPILNTPKFEKNKKKIIELISPPVKEVWFGNEEKKAVMGGDEVMYRYQLSFFNPTPIGVDISDELSEEEIKNRAKEIENFVFERTGEKLKLDFIVIRNASGDVEKFKKAIEIVEKETKMPICIASLNPEVIKEALKVVKSKPMVYAATKETLNDFIKVIKEVKKDVVLVLSSNNVKDLKNMAAKCLANGIEDLVLEPHTYPENIAETLDLNVMIRRSAIEKEDKYLGFPILNLPINAYYYALKNECPISGFFEDKEVVAKMFEATIANTLMNRYADALIMHGMDIWELMPVLTLRQCIYTDPRKPQAVEPGLYPIGNPDENSPVILTTNFSLTFYTVTGDFEKDNVTCWLLVMDTGGKAVDVSVAGGQYNGENAKKLIEETGIADKVSHRIIILPALAASTRGDIEDKTGWTCVVGTRDSSQVGDFLRNNWDKILKEWKEKNQTA.

Positions 1 to 61 (MPKKISAMDI…FEKNKKKIIE (61 aa)) constitute a 4Fe-4S domain. The [4Fe-4S] cluster site is built by cysteine 19, cysteine 22, cysteine 27, and cysteine 44.

In terms of assembly, heterodimer of delta and gamma chains. The ACDS complex is made up of alpha, epsilon, beta, gamma and delta chains with a probable stoichiometry of (alpha(2)epsilon(2))(4)-beta(8)-(gamma(1)delta(1))(8). Requires corrinoid as cofactor. [4Fe-4S] cluster serves as cofactor.

The enzyme catalyses 5,6,7,8-tetrahydrosarcinapterin + methyl-Co(III)-[corrinoid Fe-S protein] = 5-methyltetrahydrosarcinapterin + Co(I)-[corrinoid Fe-S protein] + H(+). In terms of biological role, part of a complex that catalyzes the reversible cleavage of acetyl-CoA, allowing autotrophic growth from CO(2). The chain is Acetyl-CoA decarbonylase/synthase complex subunit gamma from Methanocaldococcus jannaschii (strain ATCC 43067 / DSM 2661 / JAL-1 / JCM 10045 / NBRC 100440) (Methanococcus jannaschii).